Reading from the N-terminus, the 463-residue chain is Immune-associated nucleotide-binding protein 10 (463 aa).

Residues 3 to 211 (EPIKNIVLVG…YTYQLHRKIK (209 aa)) form the AIG1-type G domain. A G1 region spans residues 12–19 (GRTGNGKS). GTP is bound by residues 12–20 (GRTGNGKSS) and serine 33. Residues 39–43 (GVTMI) form a G2 region. Positions 61 to 64 (DTPG) are G3. The segment at 131–134 (TGGD) is G4. Residues 170–172 (DNK) form a G5 region. Asparagine 171 serves as a coordination point for GTP. Positions 173–308 (SKDEKKKVEQ…KQLIAQANRM (136 aa)) form a coiled coil.

This sequence belongs to the TRAFAC class TrmE-Era-EngA-EngB-Septin-like GTPase superfamily. AIG1/Toc34/Toc159-like paraseptin GTPase family. IAN subfamily. In terms of tissue distribution, expressed in radicles of the germinating seeds.

The polypeptide is Immune-associated nucleotide-binding protein 10 (Arabidopsis thaliana (Mouse-ear cress)).